Here is a 403-residue protein sequence, read N- to C-terminus: Phosphomevalonate dehydratase large subunit (403 aa).

G48, V49, S50, N79, and P80 together coordinate (R)-5-phosphomevalonate. C119 is a binding site for [4Fe-4S] cluster. E138 and S139 together coordinate (R)-5-phosphomevalonate. [4Fe-4S] cluster is bound by residues C301 and C358. K378 is a binding site for (R)-5-phosphomevalonate.

This sequence belongs to the AcnX type II large subunit family. As to quaternary structure, heterodimer composed of a large subunit (PMDh-L) and a small subunit (PMDh-S). [4Fe-4S] cluster is required as a cofactor.

It catalyses the reaction (R)-5-phosphomevalonate = (2E)-3-methyl-5-phosphooxypent-2-enoate + H2O. It functions in the pathway isoprenoid biosynthesis; isopentenyl diphosphate biosynthesis via mevalonate pathway. In terms of biological role, component of a hydro-lyase that catalyzes the dehydration of mevalonate 5-phosphate (MVA5P) to form trans-anhydromevalonate 5-phosphate (tAHMP). Involved in the archaeal mevalonate (MVA) pathway, which provides fundamental precursors for isoprenoid biosynthesis, such as isopentenyl diphosphate (IPP) and dimethylallyl diphosphate (DMAPP). This Methanocaldococcus jannaschii (strain ATCC 43067 / DSM 2661 / JAL-1 / JCM 10045 / NBRC 100440) (Methanococcus jannaschii) protein is Phosphomevalonate dehydratase large subunit.